Consider the following 369-residue polypeptide: Probable trehalose-phosphate phosphatase I (369 aa).

It belongs to the trehalose phosphatase family. The cofactor is a divalent metal cation.

The enzyme catalyses alpha,alpha-trehalose 6-phosphate + H2O = alpha,alpha-trehalose + phosphate. It participates in glycan biosynthesis; trehalose biosynthesis. In terms of biological role, removes the phosphate from trehalose 6-phosphate to produce free trehalose. Trehalose accumulation in plant may improve abiotic stress tolerance. This is Probable trehalose-phosphate phosphatase I (TPPI) from Arabidopsis thaliana (Mouse-ear cress).